We begin with the raw amino-acid sequence, 168 residues long: 2-C-methyl-D-erythritol 2,4-cyclodiphosphate synthase (168 aa).

A divalent metal cation-binding residues include aspartate 13 and histidine 15. 4-CDP-2-C-methyl-D-erythritol 2-phosphate-binding positions include 13 to 15 and 39 to 40; these read DVH and HS. Position 47 (histidine 47) interacts with a divalent metal cation. Residues 61 to 63, 66 to 70, phenylalanine 144, and lysine 147 each bind 4-CDP-2-C-methyl-D-erythritol 2-phosphate; these read DIG and FPDTD.

This sequence belongs to the IspF family. Homotrimer. A divalent metal cation is required as a cofactor.

It carries out the reaction 4-CDP-2-C-methyl-D-erythritol 2-phosphate = 2-C-methyl-D-erythritol 2,4-cyclic diphosphate + CMP. Its pathway is isoprenoid biosynthesis; isopentenyl diphosphate biosynthesis via DXP pathway; isopentenyl diphosphate from 1-deoxy-D-xylulose 5-phosphate: step 4/6. Functionally, involved in the biosynthesis of isopentenyl diphosphate (IPP) and dimethylallyl diphosphate (DMAPP), two major building blocks of isoprenoid compounds. Catalyzes the conversion of 4-diphosphocytidyl-2-C-methyl-D-erythritol 2-phosphate (CDP-ME2P) to 2-C-methyl-D-erythritol 2,4-cyclodiphosphate (ME-CPP) with a corresponding release of cytidine 5-monophosphate (CMP). The sequence is that of 2-C-methyl-D-erythritol 2,4-cyclodiphosphate synthase from Cupriavidus metallidurans (strain ATCC 43123 / DSM 2839 / NBRC 102507 / CH34) (Ralstonia metallidurans).